A 365-amino-acid chain; its full sequence is Chorismate synthase (365 aa).

Arg47 contributes to the NADP(+) binding site. FMN-binding positions include 124–126 (RAS), Gly287, 302–306 (KPTAT), and Arg328.

It belongs to the chorismate synthase family. Homotetramer. Requires FMNH2 as cofactor.

The enzyme catalyses 5-O-(1-carboxyvinyl)-3-phosphoshikimate = chorismate + phosphate. It functions in the pathway metabolic intermediate biosynthesis; chorismate biosynthesis; chorismate from D-erythrose 4-phosphate and phosphoenolpyruvate: step 7/7. Catalyzes the anti-1,4-elimination of the C-3 phosphate and the C-6 proR hydrogen from 5-enolpyruvylshikimate-3-phosphate (EPSP) to yield chorismate, which is the branch point compound that serves as the starting substrate for the three terminal pathways of aromatic amino acid biosynthesis. This reaction introduces a second double bond into the aromatic ring system. This Prochlorococcus marinus (strain MIT 9215) protein is Chorismate synthase.